The sequence spans 263 residues: TPR repeat-containing protein DDB_G0285095 (263 aa).

The span at 1 to 25 (MGCCGSKEKYNGEDVPKSQRLENRP) shows a compositional bias: basic and acidic residues. A disordered region spans residues 1 to 62 (MGCCGSKEKY…ASASQQNNPT (62 aa)). 3 TPR repeats span residues 87-120 (SDLLAQYGVLLSMEGKNKEAEESLRKAVEVDTDN), 121-154 (SRAWQAYGEFLERTNNPKKAKEVYGEAYKHAAPK), and 162-195 (SSLLLSYAIFIQKSGEIDKAEKLYKRIVTSGARS).

This Dictyostelium discoideum (Social amoeba) protein is TPR repeat-containing protein DDB_G0285095.